The following is a 115-amino-acid chain: MLKDTIKSGDWKGEKHVPVIEYEKEGDLVKVEVSVGKEIPHPNTPEHHIAWIELYFHPEDGQFPILVGRVAFTSHDDPLTEPRAVFFFKTKKKGKLYALSYCNIHGLWENEVQLE.

Fe cation is bound by residues Glu14, His16, His41, His47, Cys102, and His105.

The protein belongs to the desulfoferrodoxin family. In terms of assembly, homotetramer. The cofactor is Fe cation.

The enzyme catalyses reduced [rubredoxin] + superoxide + 2 H(+) = oxidized [rubredoxin] + H2O2. Uses electrons from reduced NADP, by way of rubredoxin and an oxidoreductase, to catalyze the reduction of superoxide to hydrogen peroxide. The sequence is that of Superoxide reductase (sorA) from Pyrococcus abyssi (strain GE5 / Orsay).